The chain runs to 490 residues: Adenylosuccinate synthetase, chloroplastic (490 aa).

Residues 1–45 constitute a chloroplast transit peptide; it reads MSLSSLTLDSNPRFAVGGPYHRRYPPLHHPRSFVSCSAKRPAVSA. The residue at position 46 (serine 46) is an N-acetylserine. Residues 77-83 and 105-107 contribute to the GTP site; these read GDEGKGK and GHT. Aspartate 78 acts as the Proton acceptor in catalysis. 2 residues coordinate Mg(2+): aspartate 78 and glycine 105. IMP contacts are provided by residues 78–81, 103–106, threonine 195, arginine 209, glutamine 289, threonine 304, and arginine 368; these read DEGK and NAGH. The active-site Proton donor is the histidine 106. 364-370 provides a ligand contact to substrate; it reads TTTGRPR. GTP is bound by residues arginine 370, 396-398, and 479-481; these read KLD and GIG.

This sequence belongs to the adenylosuccinate synthetase family. As to quaternary structure, homodimer. The cofactor is Mg(2+).

It is found in the plastid. The protein localises to the chloroplast. The catalysed reaction is IMP + L-aspartate + GTP = N(6)-(1,2-dicarboxyethyl)-AMP + GDP + phosphate + 2 H(+). It participates in purine metabolism; AMP biosynthesis via de novo pathway; AMP from IMP: step 1/2. In terms of biological role, plays an important role in the de novo pathway and in the salvage pathway of purine nucleotide biosynthesis. Catalyzes the first committed step in the biosynthesis of AMP from IMP. This is Adenylosuccinate synthetase, chloroplastic from Arabidopsis thaliana (Mouse-ear cress).